Consider the following 506-residue polypeptide: RNA2 polyprotein (506 aa).

The protein belongs to the nepoviruses RNA2 polyprotein family. Post-translationally, specific enzymatic cleavages in vivo by the P1 encoded 3C-like protease yield mature proteins.

It localises to the host cell junction. It is found in the host plasmodesma. Its subcellular location is the virion. The movement protein is assembled into tubules that allow the transport of virions from cell to cell. The chain is RNA2 polyprotein from Beta vulgaris subsp. vulgaris (Beet).